Reading from the N-terminus, the 1249-residue chain is Calmodulin-regulated spectrin-associated protein 3 (1249 aa).

Disordered regions lie at residues 183 to 205, 328 to 385, 430 to 457, 473 to 609, 632 to 696, 714 to 1029, and 1061 to 1111; these read KTEQEAAQRASPAAPADGAAPAQ, PDGH…SMSH, VSSDSLGPPRPAPARTPTQPPPEPGDLP, LLPD…RLEE, LGKS…HEGL, QRDM…SALA, and NNLG…TGPR. Thr-184 is subject to Phosphothreonine. Residues 189–205 are compositionally biased toward low complexity; that stretch reads AQRASPAAPADGAAPAQ. The residue at position 193 (Ser-193) is a Phosphoserine. Residues 203-312 enclose the Calponin-homology (CH) domain; the sequence is PAQPSIRYRK…LVVMLAELFM (110 aa). Ser-334, Ser-341, Ser-347, Ser-351, Ser-368, Ser-373, and Ser-382 each carry phosphoserine. Residues 341–352 show a composition bias toward low complexity; sequence SPPQNNSGSSSP. Positions 364–383 are enriched in polar residues; that stretch reads GGPQSPLRGSTGSLKSSPSM. A compositionally biased stretch (pro residues) spans 437–454; that stretch reads PPRPAPARTPTQPPPEPG. Phosphoserine occurs at positions 547, 554, and 560. The segment covering 568–579 has biased composition (basic and acidic residues); it reads AERKKQLVKAEA. Residues 594–604 show a composition bias toward low complexity; that stretch reads EALSSEMSELS. A coiled-coil region spans residues 594–628; that stretch reads EALSSEMSELSARLEEKRRAIEAQKRRIEAIFAKH. A compositionally biased stretch (acidic residues) spans 647–657; that stretch reads GEAEAEAEEAD. Ser-685 carries the post-translational modification Phosphoserine. A coiled-coil region spans residues 696–729; that stretch reads LGEYNRAVSKLSAALSSLQRDMQRLTDQQQRLLA. Residues 731-741 are compositionally biased toward pro residues; it reads PEAPGSAPPPA. Residues 754 to 779 show a composition bias toward low complexity; sequence AASPSPARRVPATRRSPGPGPSQSPR. Ser-769 carries the post-translational modification Phosphoserine. The residue at position 799 (Thr-799) is a Phosphothreonine. At Ser-814 the chain carries Phosphoserine. Polar residues predominate over residues 814–825; the sequence is SPSQVPVQTRSS. Positions 889-940 are enriched in basic and acidic residues; sequence YKDEDKPEDEMAQKRASLLERQQRRAEEARRRKQWQEVEKEQRREEAARLAQ. Residues 896–935 adopt a coiled-coil conformation; the sequence is EDEMAQKRASLLERQQRRAEEARRRKQWQEVEKEQRREEA. The span at 950-964 shows a compositional bias: low complexity; it reads VSAVPMATPAPAARA. Over residues 970 to 998 the composition is skewed to basic and acidic residues; sequence VGPRKGDFTRQEYERRAQLKLMDDLDKVL. Ser-1074 is modified (phosphoserine). Residues 1109-1243 form the CKK domain; that stretch reads GPRLYKEPSA…QGKKPTTPKK (135 aa).

It belongs to the CAMSAP1 family. As to quaternary structure, interacts with PLEKHA7. Interacts with CAMSAP2. Interacts with KATNA1 and KATNB1; leading to regulate the length of CAMSAP3-decorated microtubule stretches. Interacts with AKAP9; regulating Golgi assembly in epithelial cells. Interacts with MACF1. Interacts with AKNA.

It localises to the cytoplasm. It is found in the cytoskeleton. The protein localises to the cell junction. Its subcellular location is the adherens junction. The protein resides in the cilium axoneme. It localises to the cilium basal body. In terms of biological role, key microtubule-organizing protein that specifically binds the minus-end of non-centrosomal microtubules and regulates their dynamics and organization. Specifically recognizes growing microtubule minus-ends and autonomously decorates and stabilizes microtubule lattice formed by microtubule minus-end polymerization. Acts on free microtubule minus-ends that are not capped by microtubule-nucleating proteins or other factors and protects microtubule minus-ends from depolymerization. In addition, it also reduces the velocity of microtubule polymerization. Required for the biogenesis and the maintenance of zonula adherens by anchoring the minus-end of microtubules to zonula adherens and by recruiting the kinesin KIFC3 to those junctional sites. Required for orienting the apical-to-basal polarity of microtubules in epithelial cells: acts by tethering non-centrosomal microtubules to the apical cortex, leading to their longitudinal orientation. Plays a key role in early embryos, which lack centrosomes: accumulates at the microtubule bridges that connect pairs of cells and enables the formation of a non-centrosomal microtubule-organizing center that directs intracellular transport in the early embryo. Couples non-centrosomal microtubules with actin: interaction with MACF1 at the minus ends of non-centrosomal microtubules, tethers the microtubules to actin filaments, regulating focal adhesion size and cell migration. Plays a key role in the generation of non-centrosomal microtubules by accumulating in the pericentrosomal region and cooperating with KATNA1 to release non-centrosomal microtubules from the centrosome. Through the microtubule cytoskeleton, also regulates the organization of cellular organelles including the Golgi and the early endosomes. Through interaction with AKAP9, involved in translocation of Golgi vesicles in epithelial cells, where microtubules are mainly non-centrosomal. Plays an important role in motile cilia function by facilitatating proper orientation of basal bodies and formation of central microtubule pairs in motile cilia. In Homo sapiens (Human), this protein is Calmodulin-regulated spectrin-associated protein 3.